The following is an 86-amino-acid chain: MANSKSAKKRAIQAEKRRQHNASRRSMMRTYMKKTIAAIEAGNKEAATAALVEVTPLLDRMATKGLIHKNKAARHKSRFAAAIKAL.

A disordered region spans residues 1 to 27 (MANSKSAKKRAIQAEKRRQHNASRRSM).

The protein belongs to the bacterial ribosomal protein bS20 family.

Its function is as follows. Binds directly to 16S ribosomal RNA. This Vibrio atlanticus (strain LGP32) (Vibrio splendidus (strain Mel32)) protein is Small ribosomal subunit protein bS20.